We begin with the raw amino-acid sequence, 585 residues long: Pentatricopeptide repeat-containing protein At4g21170 (585 aa).

PPR repeat units follow at residues 152–186 (LSVS…RLSP), 187–221 (SQSA…GIVS), 222–247 (DELT…KLME), 252–286 (SCKI…KLEL), 287–321 (SFCS…KFVT), 324–358 (DSAV…ETVR), 360–394 (WDST…GITV), 396–431 (DESC…GFVP), 432–466 (CTHK…EVYF), 467–501 (DSFA…KGSL), 502–534 (DVNA…MKEI), and 538–572 (NSKS…GLKP).

This sequence belongs to the PPR family. P subfamily.

The protein is Pentatricopeptide repeat-containing protein At4g21170 of Arabidopsis thaliana (Mouse-ear cress).